A 299-amino-acid chain; its full sequence is UBX domain-containing protein 1 (299 aa).

Disordered regions lie at residues 39-61, 127-176, and 191-218; these read AGVPMETDAPAQAAPGAADSGAP, KAKL…NEDE, and EARKAKASGQPVPEAKPAPSAAPVAPPK. Positions 46–61 are enriched in low complexity; the sequence is DAPAQAAPGAADSGAP. A coiled-coil region spans residues 111 to 179; sequence AKVLEIREKI…REKNEDEIAR (69 aa). Basic and acidic residues predominate over residues 128-176; the sequence is AKLEAEENREKEKKRREDGKAMISHKEAARDREIREAAQDRRREKNEDE. The segment covering 201–213 has biased composition (low complexity); the sequence is PVPEAKPAPSAAP. A UBX domain is found at 218 to 295; that stretch reads KDYSTTTLQF…NLVPSANVIL (78 aa).

Interacts with cdc-48.1 (via N-terminus) and cdc-48.2 (via N-terminus) in vitro; the interaction with cdc-48.1 is not detected in vivo. As to expression, expressed in the germline (at protein level). Expressed in spermatocytes but not in mature sperm (at protein level). Ubiquitously expressed. Predominantly expressed in the spermatheca.

The protein resides in the cytoplasm. Its subcellular location is the perinuclear region. Ubiquitin-binding protein which acts as an adapter for ATPase cdc-48.1 and/or cdc-48.2, conferring substrate specificity. Together with ubxn-2 and ubxn-3, plays a role in hermaphrodite spermatogenesis probably by promoting the degradation of sex determination terminal factor tra-1. The protein is UBX domain-containing protein 1 of Caenorhabditis elegans.